The chain runs to 125 residues: Anticoagulant salivary protein 14 (125 aa).

The signal sequence occupies residues 1–21; sequence MGLTGTMLVLVSLAFFGSAAA. 3 N-linked (GlcNAc...) asparagine glycosylation sites follow: asparagine 26, asparagine 81, and asparagine 87. Polar residues predominate over residues 75 to 86; that stretch reads GECHLTNNSGGP. A disordered region spans residues 75-125; sequence GECHLTNNSGGPNETDDYTPAPTEKPKQKKKKTKKTKKPKRKSKKDQEKNL. The responsible for anticoagulant activity stretch occupies residues 91–125; sequence DYTPAPTEKPKQKKKKTKKTKKPKRKSKKDQEKNL. Residues 101 to 118 show a composition bias toward basic residues; it reads KQKKKKTKKTKKPKRKSK.

Belongs to the salp14 family. In terms of tissue distribution, salivary gland (at protein level). Saliva (at protein level).

The protein localises to the secreted. Its function is as follows. Salivary anticoagulant protein that facilitates blood feeding of adult ticks on vertebrate species. Inhibits host coagulation factor Xa (F10). Blocks the assembly and/or early activity of the prothrombinase complex (Xa-Va/F10-F5). Inhibits the lectin pathway of complement system activation in the host. The protein is Anticoagulant salivary protein 14 of Ixodes scapularis (Black-legged tick).